Here is a 200-residue protein sequence, read N- to C-terminus: MQQQTGGRRRQIRRVVVATSNAGKVRELQGALAPLGWQCEGLGAVTLPEETGSTYEENAALKACAAAMATGLPALADDSGIEVLALGGQPGVYSARFGNVNSDVERNVLLLEKMRRHTDRRAKFVSVLVLAYPDGKLEEYRGEVTGQLLEGPRGESGFGYDPLFLPDGSELSMGEMTLEQKQAISHRGQALAALLAAHGA.

19-24 lines the substrate pocket; the sequence is TSNAGK. Residues E49 and D78 each contribute to the Mg(2+) site. D78 functions as the Proton acceptor in the catalytic mechanism. Substrate is bound by residues S79, 158-161, K181, and 186-187; these read FGYD and HR.

This sequence belongs to the HAM1 NTPase family. Homodimer. Mg(2+) is required as a cofactor.

It carries out the reaction XTP + H2O = XMP + diphosphate + H(+). The catalysed reaction is dITP + H2O = dIMP + diphosphate + H(+). The enzyme catalyses ITP + H2O = IMP + diphosphate + H(+). In terms of biological role, pyrophosphatase that catalyzes the hydrolysis of nucleoside triphosphates to their monophosphate derivatives, with a high preference for the non-canonical purine nucleotides XTP (xanthosine triphosphate), dITP (deoxyinosine triphosphate) and ITP. Seems to function as a house-cleaning enzyme that removes non-canonical purine nucleotides from the nucleotide pool, thus preventing their incorporation into DNA/RNA and avoiding chromosomal lesions. The protein is dITP/XTP pyrophosphatase of Deinococcus radiodurans (strain ATCC 13939 / DSM 20539 / JCM 16871 / CCUG 27074 / LMG 4051 / NBRC 15346 / NCIMB 9279 / VKM B-1422 / R1).